The primary structure comprises 181 residues: GATA zinc finger domain-containing protein 22 (181 aa).

A GATA-type zinc finger spans residues 118–145 (CQICLTNNTPYWRWSVIENNKIRVCNRC).

The chain is GATA zinc finger domain-containing protein 22 (gtaV) from Dictyostelium discoideum (Social amoeba).